The following is a 723-amino-acid chain: Lim and transglutaminase domain protein ltd-1 (723 aa).

Positions 5–72 constitute an LIM zinc-binding domain; that stretch reads QHCNRCGKQV…SNHVPIAGPH (68 aa).

It belongs to the transglutaminase-like superfamily. As to expression, expressed in the Y and U rectal epithelial cells, in marginal cells of the terminal bulb and isthmus of the pharynx (at protein level).

It localises to the cytoplasm. Its subcellular location is the cytoskeleton. Cytoskeleton-associated protein. May play a role in hypodermal cell development. The polypeptide is Lim and transglutaminase domain protein ltd-1 (Caenorhabditis elegans).